A 533-amino-acid polypeptide reads, in one-letter code: MEALGFLKLEVNGPMVTVALSVALLALLKWYSTSAFSRLEKLGLRHPKPSPFIGNLMFFRQGFWESQMELRKLYGPLCGYYLGRRMFIVISEPDMIKQVLVENFSNFTNRMASGLEFKSVADSVLFLRDKRWEEVRGALMSAFSPEKLNEMTPLISQACDLLLAHLKRYAESGDAFDIQRCYRNYTTDVVASVAFGTPVDSQQAPEDPFVKHCKRFFEFCIPRPILVLLLSFPSIMVPLARILPNKNRDELNGFFNKLIRNVIALRDQQAAEERRRDFLQMVLDARHSASPVGVQDFDMVGDVFSSTRCKPNPSRQHQAGPMARPLTVDEIVGQAFIFLIAGYEIVTNTLSFATYLLATNPDCQEKLLREVDLFKEKHMVPEFCSLEEGLPYLDMVIAETLRMYPPAFRFTREAAQDCEVLGQRIPAGAVLEMAVGALHHDPEHWPSPETFNPERFTAEAQQQHRPFTYLPFGAGPRSCLGVRLGLLEVKLTLLHVLHKFQFQACPETQVPLQLESKSALGPKNGVYIKIVSR.

Residues 1 to 10 lie on the Cytoplasmic side of the membrane; that stretch reads MEALGFLKLE. The helical transmembrane segment at 11–31 threads the bilayer; that stretch reads VNGPMVTVALSVALLALLKWY. The Lumenal portion of the chain corresponds to 32-75; it reads STSAFSRLEKLGLRHPKPSPFIGNLMFFRQGFWESQMELRKLYG. The chain crosses the membrane as a helical span at residues 76-96; it reads PLCGYYLGRRMFIVISEPDMI. Over 97–223 the chain is Cytoplasmic; it reads KQVLVENFSN…KRFFEFCIPR (127 aa). The chain crosses the membrane as a helical span at residues 224–244; that stretch reads PILVLLLSFPSIMVPLARILP. Residues 245-335 lie on the Lumenal side of the membrane; it reads NKNRDELNGF…LTVDEIVGQA (91 aa). Residues 336–356 form a helical membrane-spanning segment; that stretch reads FIFLIAGYEIVTNTLSFATYL. Residues 357–533 are Cytoplasmic-facing; that stretch reads LATNPDCQEK…NGVYIKIVSR (177 aa). Cys479 contributes to the heme binding site.

This sequence belongs to the cytochrome P450 family. As to quaternary structure, monomer. Heme is required as a cofactor.

Its subcellular location is the endoplasmic reticulum membrane. The catalysed reaction is prostaglandin H2 = thromboxane A2. It catalyses the reaction prostaglandin H2 = (12S)-hydroxy-(5Z,8E,10E)-heptadecatrienoate + malonaldehyde. It carries out the reaction a hydroperoxyeicosatetraenoate = an oxoeicosatetraenoate + H2O. The enzyme catalyses (15S)-hydroperoxy-(5Z,8Z,11Z,13E)-eicosatetraenoate = 15-oxo-(5Z,8Z,11Z,13E)-eicosatetraenoate + H2O. The catalysed reaction is (15S)-hydroperoxy-(5Z,8Z,11Z,13E)-eicosatetraenoate + AH2 = (15S)-hydroxy-(5Z,8Z,11Z,13E)-eicosatetraenoate + A + H2O. In terms of biological role, catalyzes the conversion of prostaglandin H2 (PGH2) to thromboxane A2 (TXA2), a potent inducer of blood vessel constriction and platelet aggregation. Also cleaves PGH2 to 12-hydroxy-heptadecatrienoicacid (12-HHT) and malondialdehyde, which is known to act as a mediator of DNA damage. 12-HHT and malondialdehyde are formed stoichiometrically in the same amounts as TXA2. Additionally, displays dehydratase activity, toward (15S)-hydroperoxy-(5Z,8Z,11Z,13E)-eicosatetraenoate (15(S)-HPETE) producing 15-KETE and 15-HETE. In Macaca fascicularis (Crab-eating macaque), this protein is Thromboxane-A synthase (TBXAS1).